The chain runs to 356 residues: Replication factor C subunit 3 (356 aa).

An N6-acetyllysine modification is found at Lys-20. Ser-125 carries the post-translational modification Phosphoserine.

This sequence belongs to the activator 1 small subunits family. In terms of assembly, subunit of the RFC complex, an heteropentameric complex consisting of a large subunit RFC1 and four small subunits RFC2, RFC3, RFC4 and RFC5; the RFC complex interacts with PCNA. Forms an heterotetrameric complex with RFC2, RFC4 and RFC5; this complex has ATPase activity but is not stimulated by PCNA. The heterotetramer of subunits RFC2, RFC3, RFC4 and RFC5 interacts with RAD17. Interacts with CNTD1; this interaction facilitates crossover formation.

It is found in the nucleus. In terms of biological role, subunit of the replication factor C (RFC) complex which acts during elongation of primed DNA templates by DNA polymerases delta and epsilon, and is necessary for ATP-dependent loading of proliferating cell nuclear antigen (PCNA) onto primed DNA. The polypeptide is Replication factor C subunit 3 (RFC3) (Homo sapiens (Human)).